Here is a 593-residue protein sequence, read N- to C-terminus: RNA-binding protein 47 (593 aa).

Positions 1–20 (MTAEDSTAAMSSDSAAGSSA) are enriched in low complexity. The tract at residues 1–25 (MTAEDSTAAMSSDSAAGSSAKVPEG) is disordered. 3 RRM domains span residues 71-149 (CEVF…CSVD), 151-233 (CRLF…WAEP), and 246-318 (KILY…LAKP). Arg332 bears the Omega-N-methylarginine mark. Asymmetric dimethylarginine; alternate is present on residues Arg394 and Arg405. Arg394 and Arg405 each carry omega-N-methylarginine; alternate.

Belongs to the RRM RBM47 family. As to quaternary structure, homodimer. Interacts with A1CF. Interacts with APOBEC1; form an mRNA editing complex. Interacts with RBPMS.

Its subcellular location is the nucleus. The protein localises to the cytoplasm. In terms of biological role, single-stranded RNA-binding protein that functions in a variety of RNA processes, including alternative splicing, RNA stabilization, and RNA editing. Functions as an enzyme-substrate adapter for the cytidine deaminase APOBEC1. With APOBEC1 forms an mRNA editing complex involved into cytidine to uridine editing of a variety of mRNA molecules. Through the binding of their 3'UTR, also stabilizes a variety of mRNAs and regulates the expression of genes such as the interferon alpha/beta receptor and interleukin-10. Also involved in the alternative splicing of several genes including TJP1. Binds the pre-mRNA (U)GCAUG consensus sequences in downstream intronic regions of alternative exons, regulating their exclusion and inclusion into mRNAs. Independently of its RNA-binding activity, could negatively regulate MAVS by promoting its lysosomal degradation. This is RNA-binding protein 47 from Homo sapiens (Human).